Here is a 133-residue protein sequence, read N- to C-terminus: Putative elongation factor 1-delta-like protein (133 aa).

The span at 58–73 shows a compositional bias: low complexity; it reads SLAGSLGPGASSGPSG. Disordered stretches follow at residues 58–77 and 89–133; these read SLAG…DHSE and NQRD…TSRG. The span at 89–102 shows a compositional bias: basic and acidic residues; sequence NQRDLAERAGEELA.

Belongs to the EF-1-beta/EF-1-delta family.

The polypeptide is Putative elongation factor 1-delta-like protein (EEF1DP3) (Homo sapiens (Human)).